A 261-amino-acid polypeptide reads, in one-letter code: Troponin T, slow skeletal muscle (261 aa).

Positions 1–30 (MSDTEEQEYEEEQAEDEEAVEEEAPEEPEP) are enriched in acidic residues. 2 disordered regions span residues 1 to 61 (MSDT…ERVD) and 108 to 152 (ERAE…KKKV). The residue at position 2 (Ser2) is a Phosphoserine; by CK2. Positions 31-40 (VAEREEERPK) are enriched in basic and acidic residues. Over residues 42–54 (SRPVVPPLIPPKI) the composition is skewed to pro residues. The segment covering 108 to 148 (ERAEQQRFRTEKERERQAKLAEEKMRKEEEEAKKRAEDDAK) has biased composition (basic and acidic residues).

Belongs to the troponin T family. In terms of assembly, interacts with TPM3. Expressed in soleus muscle. Isoform 4 is predominantly expressed in fast muscles.

Its function is as follows. Troponin T is the tropomyosin-binding subunit of troponin, the thin filament regulatory complex which confers calcium-sensitivity to striated muscle actomyosin ATPase activity. The chain is Troponin T, slow skeletal muscle (Tnnt1) from Rattus norvegicus (Rat).